Here is a 395-residue protein sequence, read N- to C-terminus: Ribosomal RNA large subunit methyltransferase I (395 aa).

The PUA domain maps to 2 to 79 (SSRVTLHPGR…QNESVDNGFF (78 aa)).

It belongs to the methyltransferase superfamily. RlmI family.

Its subcellular location is the cytoplasm. The enzyme catalyses cytidine(1962) in 23S rRNA + S-adenosyl-L-methionine = 5-methylcytidine(1962) in 23S rRNA + S-adenosyl-L-homocysteine + H(+). In terms of biological role, specifically methylates the cytosine at position 1962 (m5C1962) of 23S rRNA. The protein is Ribosomal RNA large subunit methyltransferase I of Pseudoalteromonas atlantica (strain T6c / ATCC BAA-1087).